Reading from the N-terminus, the 161-residue chain is UPF0178 protein BOV_1904 (161 aa).

This sequence belongs to the UPF0178 family.

The chain is UPF0178 protein BOV_1904 from Brucella ovis (strain ATCC 25840 / 63/290 / NCTC 10512).